The sequence spans 366 residues: UDP-N-acetylenolpyruvoylglucosamine reductase (366 aa).

Residues 29–203 (VGPVARTLVT…LEVEFALDAS (175 aa)) enclose the FAD-binding PCMH-type domain. The active site involves R177. S258 functions as the Proton donor in the catalytic mechanism. The active site involves E358.

It belongs to the MurB family. The cofactor is FAD.

Its subcellular location is the cytoplasm. The catalysed reaction is UDP-N-acetyl-alpha-D-muramate + NADP(+) = UDP-N-acetyl-3-O-(1-carboxyvinyl)-alpha-D-glucosamine + NADPH + H(+). Its pathway is cell wall biogenesis; peptidoglycan biosynthesis. Cell wall formation. The protein is UDP-N-acetylenolpyruvoylglucosamine reductase of Mycobacterium marinum (strain ATCC BAA-535 / M).